The following is a 170-amino-acid chain: Probable inosine/xanthosine triphosphatase (170 aa).

7–12 (TTNPVK) is a binding site for substrate. Aspartate 37 contributes to the Mg(2+) binding site.

The protein belongs to the YjjX NTPase family. Homodimer. Mg(2+) is required as a cofactor. The cofactor is Mn(2+).

It catalyses the reaction XTP + H2O = XDP + phosphate + H(+). The catalysed reaction is ITP + H2O = IDP + phosphate + H(+). Its function is as follows. Phosphatase that hydrolyzes non-canonical purine nucleotides such as XTP and ITP to their respective diphosphate derivatives. Probably excludes non-canonical purines from DNA/RNA precursor pool, thus preventing their incorporation into DNA/RNA and avoiding chromosomal lesions. The sequence is that of Probable inosine/xanthosine triphosphatase from Methanopyrus kandleri (strain AV19 / DSM 6324 / JCM 9639 / NBRC 100938).